Consider the following 271-residue polypeptide: METLTVHAPSPSTNLPSYGNGAFSLSAPHVPGAGPLLVQVVYSFFQSPNMCLQALTQLEDYIKKHGASNPLTLQIISTNIGYFCNADRNLVLHPGISVYDAYHFAKPAPSQYDYRSMNMKQMSGNVTTPIVALAHYLWGNGAERSVNIANIGLKISPMKINQIKDIIKSGVVGTFPVSTKFTHATGDYNVITGAYLGNITLKTEGTLTISANGSWTYNGVVRSYDDKYDFNASTHRGIIGESLTRLGAMFSGKEYQILLPGEIHIKESGKR.

The TonB box motif lies at 2 to 9 (ETLTVHAP).

Colicins are polypeptide toxins produced by and active against E.coli and closely related bacteria. In terms of biological role, this is a calcium-requiring inhibitor for murein biosynthesis; it causes lysis of sensitive cells accompanied by murein degradation. The target site is possibly the cytoplasmic membrane. This chain is Colicin-M (cma), found in Escherichia coli.